Here is a 396-residue protein sequence, read N- to C-terminus: S-adenosylmethionine synthase (396 aa).

His-16 is an ATP binding site. Position 18 (Asp-18) interacts with Mg(2+). A K(+)-binding site is contributed by Glu-44. 2 residues coordinate L-methionine: Glu-57 and Gln-100. Residues 100 to 110 (QSPDIAQGVDD) form a flexible loop region. ATP is bound by residues 174-176 (DAK), 241-242 (RF), Asp-250, 256-257 (RK), Ala-273, and Lys-277. Asp-250 is an L-methionine binding site. Lys-281 contributes to the L-methionine binding site.

The protein belongs to the AdoMet synthase family. Homotetramer; dimer of dimers. The cofactor is Mg(2+). K(+) is required as a cofactor.

It localises to the cytoplasm. It catalyses the reaction L-methionine + ATP + H2O = S-adenosyl-L-methionine + phosphate + diphosphate. It participates in amino-acid biosynthesis; S-adenosyl-L-methionine biosynthesis; S-adenosyl-L-methionine from L-methionine: step 1/1. Its function is as follows. Catalyzes the formation of S-adenosylmethionine (AdoMet) from methionine and ATP. The overall synthetic reaction is composed of two sequential steps, AdoMet formation and the subsequent tripolyphosphate hydrolysis which occurs prior to release of AdoMet from the enzyme. The chain is S-adenosylmethionine synthase from Pediococcus pentosaceus (strain ATCC 25745 / CCUG 21536 / LMG 10740 / 183-1w).